Reading from the N-terminus, the 288-residue chain is Large ribosomal subunit protein uL2 (288 aa).

The tract at residues Gly232–Tyr265 is disordered. Basic and acidic residues predominate over residues Asp239–Glu255.

It belongs to the universal ribosomal protein uL2 family. As to quaternary structure, part of the 50S ribosomal subunit. Forms a bridge to the 30S subunit in the 70S ribosome.

Its function is as follows. One of the primary rRNA binding proteins. Required for association of the 30S and 50S subunits to form the 70S ribosome, for tRNA binding and peptide bond formation. It has been suggested to have peptidyltransferase activity; this is somewhat controversial. Makes several contacts with the 16S rRNA in the 70S ribosome. This chain is Large ribosomal subunit protein uL2, found in Hydrogenobaculum sp. (strain Y04AAS1).